The chain runs to 255 residues: Tail completion protein p143 (255 aa).

It localises to the virion. Functionally, putative role in tail stability. In Escherichia phage T5 (Enterobacteria phage T5), this protein is Tail completion protein p143.